We begin with the raw amino-acid sequence, 171 residues long: MEKLPKKRVSKTKSQKLIHSLTTQKNRAFLKKISASEMLLELEKGAFKKNEAYFISDEEDKNYVLVPDNVISLLAENARKAFEARLRAELERDIITQAPIDFEDVREVSLQLLENLRQKDGNLPNINTLNFVKQIKKEHPNLFFNFDNMFKQPPFNENNFENFDNSDEENF.

This sequence belongs to the UPF0763 family.

The polypeptide is UPF0763 protein KHP_0657 (Helicobacter pylori (strain 51)).